A 982-amino-acid polypeptide reads, in one-letter code: Cell division cycle-associated protein 2 (982 aa).

Polar residues predominate over residues 75–87; sequence VKTSSGKSTSSLQ. The interval 75–97 is disordered; it reads VKTSSGKSTSSLQKARRRSTVGV. Residues Ser-100, Ser-122, and Ser-133 each carry the phosphoserine modification. Disordered stretches follow at residues 192 to 216 and 274 to 315; these read SGFPVNSSSKRRRISSQDSPDNYLS and TPLS…CGSS. 2 stretches are compositionally biased toward polar residues: residues 207–216 and 275–315; these read SQDSPDNYLS and PLSS…CGSS. Ser-286, Ser-296, and Ser-306 each carry phosphoserine. Thr-309 carries the post-translational modification Phosphothreonine. The PP1-binding domain occupies 379–436; the sequence is KRKRVTFGEDLSPEVFDESLPANTPLCKGGTPVRPRTVKTTSPLQSPVHEQFLQPNFD. Residues Ser-390 and Ser-397 each carry the phosphoserine modification. 4 disordered regions span residues 400 to 473, 489 to 545, 568 to 638, and 651 to 716; these read ANTP…NTCS, TRTS…KSYR, KPLL…QSQV, and ASER…PQSQ. Thr-402 carries the post-translational modification Phosphothreonine. At Ser-424 the chain carries Phosphoserine. 2 stretches are compositionally biased toward polar residues: residues 451–473 and 498–512; these read SFANLSLSKSSLSETPPGTNTCS and TLSSTGVCSSYTTQA. Residues 518 to 545 show a composition bias toward basic residues; that stretch reads KMSRRKSREKKHTSAALPKKKQVLKSYR. Residues Ser-572 and Ser-595 each carry the phosphoserine modification. Over residues 651–668 the composition is skewed to polar residues; that stretch reads ASERGPNASTRDTGSEGN. The span at 669–685 shows a compositional bias: basic and acidic residues; it reads TRAESKCQSAKEPKPGT. Ser-735 is subject to Phosphoserine. Lys-741 participates in a covalent cross-link: Glycyl lysine isopeptide (Lys-Gly) (interchain with G-Cter in SUMO2). The interval 910–982 is disordered; the sequence is ECPSSKEETI…SLKGESAQLP (73 aa). Ser-913 is subject to Phosphoserine. The segment covering 931 to 942 has biased composition (low complexity); sequence VSGSESQGVGSS. Ser-950 is subject to Phosphoserine. Over residues 952-964 the composition is skewed to polar residues; sequence CGSTLTDANSATQ. Ser-973 carries the post-translational modification Phosphoserine.

In terms of assembly, interacts with PPP1CC. In terms of processing, phosphorylated by CDK1. May regulate its subcellular location.

Its subcellular location is the nucleus. Its function is as follows. Regulator of chromosome structure during mitosis required for condensin-depleted chromosomes to retain their compact architecture through anaphase. Acts by mediating the recruitment of phopsphatase PP1-gamma subunit (PPP1CC) to chromatin at anaphase and into the following interphase. At anaphase onset, its association with chromatin targets a pool of PPP1CC to dephosphorylate substrates. This Mus musculus (Mouse) protein is Cell division cycle-associated protein 2 (Cdca2).